Consider the following 147-residue polypeptide: Lysozyme C (147 aa).

A signal peptide spans 1–18 (MKALVILGFLFLSVAVQG). Residues 19–147 (KVFERCELAR…VSSYVEGCTL (129 aa)) form the C-type lysozyme domain. Cystine bridges form between cysteine 24–cysteine 145, cysteine 48–cysteine 133, cysteine 83–cysteine 99, and cysteine 95–cysteine 113. Active-site residues include glutamate 53 and aspartate 71.

The protein belongs to the glycosyl hydrolase 22 family. As to quaternary structure, monomer. Stomach-specific.

The enzyme catalyses Hydrolysis of (1-&gt;4)-beta-linkages between N-acetylmuramic acid and N-acetyl-D-glucosamine residues in a peptidoglycan and between N-acetyl-D-glucosamine residues in chitodextrins.. Functionally, lysozymes have primarily a bacteriolytic function; those in tissues and body fluids are associated with the monocyte-macrophage system and enhance the activity of immunoagents. This Bos taurus (Bovine) protein is Lysozyme C (LYZ1).